Reading from the N-terminus, the 318-residue chain is Transcriptional regulator NovG (318 aa).

Polar residues predominate over residues Val146–Gly156. Residues Val146–Gly176 form a disordered region. Residues Thr162–Gly176 are compositionally biased toward basic and acidic residues.

This sequence belongs to the ParB family.

Functionally, transcription regulator that specifically activates expression of genes involved in the novobiocin biosynthesis pathway. Binds 5'-GTTCRACTG(N)(11)CRGTYGAAC-3' DNA sequence. The protein is Transcriptional regulator NovG (novG) of Streptomyces niveus (Streptomyces spheroides).